A 207-amino-acid chain; its full sequence is Large ribosomal subunit protein bL25 (207 aa).

A disordered region spans residues 171–207 (EEETVVTVSAPRAEEEPTTTEAPEPEAVHGNDEEPVE). The span at 196–207 (EAVHGNDEEPVE) shows a compositional bias: basic and acidic residues.

The protein belongs to the bacterial ribosomal protein bL25 family. CTC subfamily. In terms of assembly, part of the 50S ribosomal subunit; part of the 5S rRNA/L5/L18/L25 subcomplex. Contacts the 5S rRNA. Binds to the 5S rRNA independently of L5 and L18.

Functionally, this is one of the proteins that binds to the 5S RNA in the ribosome where it forms part of the central protuberance. The polypeptide is Large ribosomal subunit protein bL25 (Listeria innocua serovar 6a (strain ATCC BAA-680 / CLIP 11262)).